The chain runs to 185 residues: HTH-type transcriptional regulator SAR2658 (185 aa).

One can recognise an HTH tetR-type domain in the interval 6–66 (KENRQRIEEI…YVIQRDLDIF (61 aa)). The H-T-H motif DNA-binding region spans 29–48 (SMNRIAKELGIGMGTLYRHF).

This Staphylococcus aureus (strain MRSA252) protein is HTH-type transcriptional regulator SAR2658.